We begin with the raw amino-acid sequence, 135 residues long: Snaclec echicetin subunit alpha (135 aa).

The N-terminal stretch at 1-4 (GADE) is a signal peptide. Intrachain disulfides connect cysteine 6-cysteine 17, cysteine 34-cysteine 129, and cysteine 104-cysteine 121. Residues 13–130 (NGVYCYMLFK…CENTFPFMCK (118 aa)) form the C-type lectin domain.

It belongs to the snaclec family. As to quaternary structure, heterodimer of subunits alpha and beta; disulfide-linked. Expressed by the venom gland.

It is found in the secreted. Its function is as follows. Binding of echicetin to GPIbalpha (GP1BA) receptor on platelets alone results in inhibition of platelet aggregation, while binding to both GP1BA receptor and IgMk promotes platelet aggregation and signal transduction. This Echis carinatus (Saw-scaled viper) protein is Snaclec echicetin subunit alpha.